Here is a 412-residue protein sequence, read N- to C-terminus: BURP domain-containing protein 13 (412 aa).

The signal sequence occupies residues 1 to 23; the sequence is MARFLLLLVAVAAAAAVLSLGDA. The BURP domain occupies 190–406; that stretch reads FFHEEAVRVG…PYGHIVWAKN (217 aa). Residue asparagine 369 is glycosylated (N-linked (GlcNAc...) asparagine).

As to expression, specifically expressed in anthers, in the tapetum and microspores (at protein level).

Functionally, required for pollen development. Probably synthesized in the tapetum, packaged in Ubisch bodies and transported at appropriate stages to the micropsores. This Oryza sativa subsp. japonica (Rice) protein is BURP domain-containing protein 13 (BURP13).